A 209-amino-acid chain; its full sequence is Auxin-binding protein ABP19b (209 aa).

Residues 1–18 (MIFPIFFTFFLLLSTSHA) form the signal peptide. Residues Cys24 and Cys39 are joined by a disulfide bond. A Cupin type-1 domain is found at 53–199 (SGLGIAGNTT…TTLLDAPQIK (147 aa)). An N-linked (GlcNAc...) asparagine glycan is attached at Asn60. Positions 101, 103, 108, and 147 each coordinate Mn(2+).

Belongs to the germin family. As to quaternary structure, interacts with ABP20.

It is found in the secreted. The protein resides in the extracellular space. It localises to the apoplast. Its subcellular location is the cell wall. Functionally, probable receptor for the plant growth-promoting hormone auxin. The polypeptide is Auxin-binding protein ABP19b (ABP19B) (Prunus persica (Peach)).